The following is a 202-amino-acid chain: Ion-translocating oxidoreductase complex subunit G (202 aa).

A helical membrane pass occupies residues Ala-11 to Leu-31. At Thr-177 the chain carries FMN phosphoryl threonine.

The protein belongs to the RnfG family. As to quaternary structure, the complex is composed of six subunits: RnfA, RnfB, RnfC, RnfD, RnfE and RnfG. It depends on FMN as a cofactor.

It is found in the cell inner membrane. Its function is as follows. Part of a membrane-bound complex that couples electron transfer with translocation of ions across the membrane. The chain is Ion-translocating oxidoreductase complex subunit G from Pasteurella multocida (strain Pm70).